Here is a 163-residue protein sequence, read N- to C-terminus: Globin CTT-Z (163 aa).

The N-terminal stretch at 1–16 (MKFFAVLALCIVGAIA) is a signal peptide. One can recognise a Globin domain in the interval 18–162 (PLTSDEAALV…VYTAVFQIVT (145 aa)). Positions 76 and 111 each coordinate heme b.

This sequence belongs to the globin family.

The polypeptide is Globin CTT-Z (CTT-Z) (Chironomus thummi thummi (Midge)).